The sequence spans 168 residues: uncharacterized protein (168 aa).

Residues 1–21 (MVYEVLAVVSGGLLGFGVTWA) form the signal peptide.

This is an uncharacterized protein from Archaeoglobus fulgidus (strain ATCC 49558 / DSM 4304 / JCM 9628 / NBRC 100126 / VC-16).